The chain runs to 71 residues: uncharacterized protein (71 aa).

This is an uncharacterized protein from Bacillus subtilis (strain 168).